The primary structure comprises 831 residues: AMP deaminase (831 aa).

Disordered stretches follow at residues 26–45, 66–110, and 130–149; these read NPGANRDEEVAAAPSSQDTP, NGTQ…KLLN, and NAVVSSVGGPETDPGNMETT. 2 positions are modified to phosphoserine: serine 79 and serine 84. Zn(2+) is bound by residues histidine 319 and histidine 321. Residues histidine 321 and 390–395 contribute to the substrate site; that span reads KFNLKY. Histidine 587 is a binding site for Zn(2+). Glutamate 590 serves as a coordination point for substrate. Histidine 609 functions as the Proton acceptor in the catalytic mechanism. Aspartate 664 serves as a coordination point for Zn(2+). 665 to 668 is a binding site for substrate; that stretch reads DPLQ. Phosphoserine occurs at positions 758, 776, 780, and 782.

This sequence belongs to the metallo-dependent hydrolases superfamily. Adenosine and AMP deaminases family. As to quaternary structure, homotetramer. Zn(2+) serves as cofactor.

It is found in the cytoplasm. The catalysed reaction is AMP + H2O + H(+) = IMP + NH4(+). The protein operates within purine metabolism; IMP biosynthesis via salvage pathway; IMP from AMP: step 1/1. In terms of biological role, AMP deaminase plays a critical role in energy metabolism. The sequence is that of AMP deaminase (ada1) from Schizosaccharomyces pombe (strain 972 / ATCC 24843) (Fission yeast).